The sequence spans 138 residues: Small ribosomal subunit protein uS11c (138 aa).

The disordered stretch occupies residues 1-23 (MAKPIPRIGSRRNGRISSRKSTR). The span at 9 to 23 (GSRRNGRISSRKSTR) shows a compositional bias: basic residues.

Belongs to the universal ribosomal protein uS11 family. As to quaternary structure, part of the 30S ribosomal subunit.

The protein localises to the plastid. It localises to the chloroplast. In Cucumis sativus (Cucumber), this protein is Small ribosomal subunit protein uS11c.